The following is a 244-amino-acid chain: Mono-ADP-ribosyltransferase C3 (244 aa).

The N-terminal stretch at 1–40 is a signal peptide; it reads MKGIRKSILCLVLSAGVIAPVTTSIVQSPQKCYACTVDKG. The 201-residue stretch at 44-244 folds into the TR mART core domain; sequence DTFTEFTNVE…QIMITAMIFK (201 aa). Residues T80, N87, R91, 128-131, and 167-169 contribute to the NAD(+) site; these read RGDD and RTE. R128 is a catalytic residue. S174 is an active-site residue. NAD(+) is bound by residues 182-185 and 211-213; these read FGGR and QLE. E213 is an active-site residue.

To exoenzymes 3 of C.limosum and C.botulinum D phage, and to S.aureus ediN. As to quaternary structure, monomer.

The protein localises to the secreted. The catalysed reaction is L-asparaginyl-[protein] + NAD(+) = N(4)-(ADP-D-ribosyl)-L-asparaginyl-[protein] + nicotinamide + H(+). In terms of biological role, ADP-ribosylates eukaryotic Rho and Rac proteins on an asparagine residue. The protein is Mono-ADP-ribosyltransferase C3 of Clostridium botulinum C phage (Clostridium botulinum C bacteriophage).